The primary structure comprises 631 residues: Vacuolar-sorting receptor 6 (631 aa).

An N-terminal signal peptide occupies residues 1-25; that stretch reads MSLIHKGATLALFLALTMVVNGVFG. Over 26 to 563 the chain is Lumenal; sequence RFIVEKSSVT…CIERSGSRIG (538 aa). In terms of domain architecture, PA spans 57 to 165; the sequence is NYGGYMIGSV…SFANTLKQAL (109 aa). N294 and N431 each carry an N-linked (GlcNAc...) asparagine glycan. EGF-like domains are found at residues 413–463 and 494–540; these read ETNE…TSCE and ETSG…FECK. Disulfide bonds link C417-C435, C424-C444, C446-C462, C498-C511, and C530-C539. A helical membrane pass occupies residues 564 to 584; sequence WFPTFVILAAVASICVGGYVF. The Cytoplasmic portion of the chain corresponds to 585–631; that stretch reads YKYRLRSYMDSEIMAIMSQYMPLESQNTTDPMTGESQHQQLRLTSAA. Positions 604 to 607 match the Tyrosine-based internalization motif motif; sequence YMPL. Residues 610-631 are disordered; it reads QNTTDPMTGESQHQQLRLTSAA.

The protein belongs to the VSR (BP-80) family. In terms of tissue distribution, expressed in seedlings, roots, leaves, flowers and siliques.

The protein localises to the membrane. It localises to the golgi apparatus membrane. The protein resides in the cytoplasmic vesicle. Its subcellular location is the clathrin-coated vesicle membrane. It is found in the prevacuolar compartment membrane. Its function is as follows. Vacuolar-sorting receptor (VSR) involved in clathrin-coated vesicles sorting from Golgi apparatus to vacuoles. This Arabidopsis thaliana (Mouse-ear cress) protein is Vacuolar-sorting receptor 6 (VSR6).